The sequence spans 325 residues: Glutarate 2-hydroxylase (325 aa).

3 residues coordinate Fe cation: His-160, Asp-162, and His-292.

This sequence belongs to the glutarate hydroxylase family. In terms of assembly, homotetramer. It depends on Fe(2+) as a cofactor.

It carries out the reaction glutarate + 2-oxoglutarate + O2 = (S)-2-hydroxyglutarate + succinate + CO2. The protein operates within amino-acid degradation. Acts as an alpha-ketoglutarate-dependent dioxygenase catalyzing hydroxylation of glutarate (GA) to L-2-hydroxyglutarate (L2HG). Functions in a L-lysine degradation pathway that proceeds via cadaverine, glutarate and L-2-hydroxyglutarate. This chain is Glutarate 2-hydroxylase, found in Escherichia coli O17:K52:H18 (strain UMN026 / ExPEC).